Reading from the N-terminus, the 102-residue chain is Ferredoxin, 2Fe-2S (102 aa).

Residues Cys11, Cys24, Cys56, and Cys60 each contribute to the [2Fe-2S] cluster site.

This sequence belongs to the 2Fe2S Shethna-type ferredoxin family. Requires [2Fe-2S] cluster as cofactor.

Its function is as follows. Ferredoxins are iron-sulfur proteins that transfer electrons in a wide variety of metabolic reactions. This is Ferredoxin, 2Fe-2S from Clostridium pasteurianum.